A 181-amino-acid polypeptide reads, in one-letter code: 3-hexulose-6-phosphate isomerase (181 aa).

The SIS domain occupies 27-168 (ILSLVDAAGR…IAKLVDQKGL (142 aa)). Residues S45 and 84–89 (SGSGST) contribute to the substrate site. E148 acts as the Proton acceptor in catalysis.

It belongs to the SIS family. PHI subfamily. As to quaternary structure, homodimer.

The enzyme catalyses D-arabino-hex-3-ulose 6-phosphate = beta-D-fructose 6-phosphate. It participates in one-carbon metabolism; formaldehyde assimilation via RuMP pathway; D-fructose 6-phosphate from D-ribulose 5-phosphate and formaldehyde: step 2/2. Catalyzes the isomerization between 3-hexulose 6-phosphate and fructose 6-phosphate. This Methylomonas aminofaciens protein is 3-hexulose-6-phosphate isomerase (rmpB).